The primary structure comprises 487 residues: Steroid 21-hydroxylase (487 aa).

Positions 92 and 117 each coordinate heme b. Arginine 228 serves as a coordination point for 17alpha-hydroxyprogesterone. Arginine 228 is a binding site for progesterone. Heme b-binding residues include histidine 357, arginine 418, and cysteine 420.

The protein belongs to the cytochrome P450 family. The cofactor is heme b.

It is found in the endoplasmic reticulum membrane. It localises to the microsome membrane. It catalyses the reaction progesterone + reduced [NADPH--hemoprotein reductase] + O2 = 21-hydroxyprogesterone + oxidized [NADPH--hemoprotein reductase] + H2O + H(+). The catalysed reaction is 17alpha-hydroxyprogesterone + reduced [NADPH--hemoprotein reductase] + O2 = 11-deoxycortisol + oxidized [NADPH--hemoprotein reductase] + H2O + H(+). In terms of biological role, a cytochrome P450 monooxygenase that plays a major role in adrenal steroidogenesis. Catalyzes the hydroxylation at C-21 of progesterone and 17alpha-hydroxyprogesterone to respectively form 11-deoxycorticosterone and 11-deoxycortisol, intermediate metabolites in the biosynthetic pathway of mineralocorticoids and glucocorticoids. Mechanistically, uses molecular oxygen inserting one oxygen atom into a substrate, and reducing the second into a water molecule, with two electrons provided by NADPH via cytochrome P450 reductase (CPR; NADPH-ferrihemoprotein reductase). The sequence is that of Steroid 21-hydroxylase (Cyp21) from Mus musculus (Mouse).